A 94-amino-acid chain; its full sequence is Integration host factor subunit beta (94 aa).

It belongs to the bacterial histone-like protein family. Heterodimer of an alpha and a beta chain.

In terms of biological role, this protein is one of the two subunits of integration host factor, a specific DNA-binding protein that functions in genetic recombination as well as in transcriptional and translational control. In Haemophilus influenzae (strain ATCC 51907 / DSM 11121 / KW20 / Rd), this protein is Integration host factor subunit beta (ihfB).